Reading from the N-terminus, the 370-residue chain is Putative agmatine deiminase (370 aa).

Cysteine 361 acts as the Amidino-cysteine intermediate in catalysis.

Belongs to the agmatine deiminase family.

The enzyme catalyses agmatine + H2O = N-carbamoylputrescine + NH4(+). The chain is Putative agmatine deiminase from Shewanella sp. (strain MR-7).